The sequence spans 274 residues: Oxidized low-density lipoprotein receptor 1 (274 aa).

The disordered stretch occupies residues Met-1–Arg-28. The Cytoplasmic portion of the chain corresponds to Met-1–Pro-37. Over residues Asp-13 to Gly-26 the composition is skewed to basic and acidic residues. Residues Ala-38–Leu-60 form a helical; Signal-anchor for type II membrane protein membrane-spanning segment. Cys-46 carries S-palmitoyl cysteine lipidation. Residues Ser-61 to Trp-150 are neck. Topologically, residues Ser-61–Gln-274 are extracellular. Residues Arg-89 to Gly-142 adopt a coiled-coil conformation. Residue Asn-139 is glycosylated (N-linked (GlcNAc...) asparagine). 3 cysteine pairs are disulfide-bonded: Cys-144-Cys-155, Cys-172-Cys-264, and Cys-243-Cys-256. The region spanning His-151–Gln-265 is the C-type lectin domain.

As to quaternary structure, homodimer; disulfide-linked. May form a hexamer composed of 3 homodimers. Interacts with HSP70. Post-translationally, N-glycosylated.

It is found in the cell membrane. The protein resides in the membrane raft. It localises to the secreted. Functionally, receptor that mediates the recognition, internalization and degradation of oxidatively modified low density lipoprotein (oxLDL) by vascular endothelial cells. OxLDL is a marker of atherosclerosis that induces vascular endothelial cell activation and dysfunction, resulting in pro-inflammatory responses, pro-oxidative conditions and apoptosis. Its association with oxLDL induces the activation of NF-kappa-B through an increased production of intracellular reactive oxygen and a variety of pro-atherogenic cellular responses including a reduction of nitric oxide (NO) release, monocyte adhesion and apoptosis. In addition to binding oxLDL, it acts as a receptor for the HSP70 protein involved in antigen cross-presentation to naive T-cells in dendritic cells, thereby participating in cell-mediated antigen cross-presentation. Also involved in inflammatory process, by acting as a leukocyte-adhesion molecule at the vascular interface in endotoxin-induced inflammation. Also acts as a receptor for advanced glycation end (AGE) products, activated platelets, monocytes, apoptotic cells and both Gram-negative and Gram-positive bacteria. The chain is Oxidized low-density lipoprotein receptor 1 (OLR1) from Sus scrofa (Pig).